The sequence spans 584 residues: Tricyclene synthase 1e20, chloroplastic (584 aa).

A chloroplast-targeting transit peptide spans 1 to 45; that stretch reads MIYIWICFYLQTTLLPCSLSTRTKFAICHNTSKLHRAAYKTSRWN. N-linked (GlcNAc...) asparagine glycans are attached at residues Asn30, Asn209, and Asn322. Positions 341 and 345 each coordinate Mg(2+). The DDXXD motif signature appears at 341-345; sequence DDIFD. Residues Asn387 and Asn468 are each glycosylated (N-linked (GlcNAc...) asparagine). Positions 485, 489, and 493 each coordinate Mg(2+). Asn512 carries an N-linked (GlcNAc...) asparagine glycan.

It belongs to the terpene synthase family. Tpsg subfamily. The cofactor is Mg(2+). Mn(2+) serves as cofactor. In terms of tissue distribution, accumulates at low levels in flowers; mostly expressed in both upper and lower petal lobes, and, to a lower extent, in tube and stamens.

It is found in the plastid. It localises to the chloroplast stroma. It carries out the reaction (2E)-geranyl diphosphate = tricyclene + diphosphate. The enzyme catalyses (2E)-geranyl diphosphate = beta-myrcene + diphosphate. It functions in the pathway secondary metabolite biosynthesis; terpenoid biosynthesis. Functionally, may contribute to floral scent emission. The protein is Tricyclene synthase 1e20, chloroplastic (1e20) of Antirrhinum majus (Garden snapdragon).